We begin with the raw amino-acid sequence, 54 residues long: UPF0391 membrane protein BMEI0373 (54 aa).

The next 2 membrane-spanning stretches (helical) occupy residues 5–25 (VLVF…GIAG) and 29–48 (GIAQ…SLIA).

Belongs to the UPF0391 family.

It localises to the cell membrane. This is UPF0391 membrane protein BMEI0373 from Brucella melitensis biotype 1 (strain ATCC 23456 / CCUG 17765 / NCTC 10094 / 16M).